The primary structure comprises 438 residues: Putative ZDHHC-type palmitoyltransferase 7 (438 aa).

N-linked (GlcNAc...) asparagine glycosylation is found at asparagine 12 and asparagine 13. A run of 2 helical transmembrane segments spans residues 48 to 68 (IFCL…GTIL) and 77 to 97 (YFYL…YFLI). N-linked (GlcNAc...) asparagine glycans are attached at residues asparagine 119, asparagine 144, and asparagine 157. A disordered region spans residues 183–239 (EDSINDDTITTTTTTTTTTSTSTIPEISNDDDDNNNENNNDNVNNRNNNNSNGEKED). Low complexity-rich tracts occupy residues 190 to 206 (TITT…TSTI) and 218 to 234 (NENN…NNSN). Asparagine 231 carries an N-linked (GlcNAc...) asparagine glycan. Residues 249-299 (YFCKKCLVDIPLRTKHCVKCNRCVLKYDHHCVFIGGCVGLNNHKNFLLFLL) enclose the DHHC domain. Transmembrane regions (helical) follow at residues 294 to 314 (FLLF…IIVT) and 330 to 350 (IAII…FALF). Residue asparagine 360 is glycosylated (N-linked (GlcNAc...) asparagine).

Belongs to the DHHC palmitoyltransferase family.

The protein resides in the membrane. It carries out the reaction L-cysteinyl-[protein] + hexadecanoyl-CoA = S-hexadecanoyl-L-cysteinyl-[protein] + CoA. This Dictyostelium discoideum (Social amoeba) protein is Putative ZDHHC-type palmitoyltransferase 7.